A 473-amino-acid chain; its full sequence is Rifampicin monooxygenase (473 aa).

FAD-binding residues include Thr-12, Glu-31, Lys-32, and Arg-41. Arg-43 provides a ligand contact to rifampicin. FAD contacts are provided by Gln-98, Val-122, and Thr-156. Arg-196 serves as a coordination point for rifampicin. Position 276 (Asp-276) interacts with FAD. Gly-285 provides a ligand contact to rifampicin. FAD contacts are provided by Leu-289 and Asn-290.

Belongs to the rifampicin monooxygenase family. In terms of assembly, homodimer. FAD serves as cofactor.

The enzyme catalyses rifampicin + NADPH + O2 = rifampicin para-naphthoquinone carboxamide + NADP(+) + H2O + H(+). It carries out the reaction rifampicin + NADH + O2 = rifampicin para-naphthoquinone carboxamide + NAD(+) + H2O + H(+). Monooxygenase that can modify rifampicin, thereby inactivating its antibiotic activity. It constitutes a secondary rifampicin resistance factor. The sequence is that of Rifampicin monooxygenase from Nocardia farcinica (strain IFM 10152).